Reading from the N-terminus, the 149-residue chain is Large-conductance mechanosensitive channel (149 aa).

Transmembrane regions (helical) follow at residues 14 to 34 and 85 to 105; these read VVDMAVGIIVGGAFGKLVNTL and GLFINAMISFIIMAFAVYLLV.

The protein belongs to the MscL family. As to quaternary structure, homopentamer.

The protein localises to the cell inner membrane. Its function is as follows. Channel that opens in response to stretch forces in the membrane lipid bilayer. May participate in the regulation of osmotic pressure changes within the cell. This Chlorobium phaeovibrioides (strain DSM 265 / 1930) (Prosthecochloris vibrioformis (strain DSM 265)) protein is Large-conductance mechanosensitive channel.